The following is a 97-amino-acid chain: Protein RADIALIS-like 6 (97 aa).

An SANT domain is found at 7-59 (SSISPWTFSQNKMFERALAVYDKDTPDRWHNVAKAVGGKTVEEVKRHYDILVE).

Expressed in the micropylar endosperm surrounding globular-stage embryos but no expression was detected elsewhere, including floral tissues.

It localises to the nucleus. Probable transcription factor. The polypeptide is Protein RADIALIS-like 6 (RL6) (Arabidopsis thaliana (Mouse-ear cress)).